Here is a 214-residue protein sequence, read N- to C-terminus: Probable transaldolase (214 aa).

Lysine 83 (schiff-base intermediate with substrate) is an active-site residue.

It belongs to the transaldolase family. Type 3B subfamily.

Its subcellular location is the cytoplasm. The enzyme catalyses D-sedoheptulose 7-phosphate + D-glyceraldehyde 3-phosphate = D-erythrose 4-phosphate + beta-D-fructose 6-phosphate. It participates in carbohydrate degradation; pentose phosphate pathway; D-glyceraldehyde 3-phosphate and beta-D-fructose 6-phosphate from D-ribose 5-phosphate and D-xylulose 5-phosphate (non-oxidative stage): step 2/3. Functionally, transaldolase is important for the balance of metabolites in the pentose-phosphate pathway. This is Probable transaldolase from Desulfosudis oleivorans (strain DSM 6200 / JCM 39069 / Hxd3) (Desulfococcus oleovorans).